The primary structure comprises 293 residues: D-alanine--D-alanine ligase (293 aa).

The ATP-grasp domain occupies 98–291; it reads KIIWEQHSLT…FNKLVTSIIN (194 aa). 124-177 is an ATP binding site; sequence NFPLPWAVKPTLEGSSIGISKVDNQMQLNDALMLAWQYAPYALIEQWIKGDEYT. Mg(2+) contacts are provided by Asp-245, Glu-258, and Asn-260.

It belongs to the D-alanine--D-alanine ligase family. It depends on Mg(2+) as a cofactor. Requires Mn(2+) as cofactor.

It is found in the cytoplasm. The enzyme catalyses 2 D-alanine + ATP = D-alanyl-D-alanine + ADP + phosphate + H(+). The protein operates within cell wall biogenesis; peptidoglycan biosynthesis. In terms of biological role, cell wall formation. In Vesicomyosocius okutanii subsp. Calyptogena okutanii (strain HA), this protein is D-alanine--D-alanine ligase.